The following is a 1280-amino-acid chain: Multidrug resistance protein 1 (1280 aa).

The Cytoplasmic portion of the chain corresponds to 1–72 (MSRAHAAYAN…YADATDRVLM (72 aa)). One can recognise an ABC transmembrane type-1 1 domain in the interval 72-357 (MIAGTAFAVA…VAPSRTAFTE (286 aa)). 6 helical membrane passes run 73-93 (IAGT…SFIF), 120-140 (YVGI…TVAA), 189-209 (KLSQ…AGFV), 216-236 (LMMI…GSIV), 297-317 (LSAA…FFFG), and 326-345 (RDMA…SFGL). Topologically, residues 346–712 (GFVAPSRTAF…MRMNKDKAWA (367 aa)) are cytoplasmic. The ABC transporter 1 domain maps to 391–634 (IEFRNVRFAY…DGEFAAVAKM (244 aa)). 426-433 (GASGCGKS) is a binding site for ATP. A run of 6 helical transmembrane segments spans residues 713 to 733 (VALG…SSIV), 762 to 781 (PLFI…HGFY), 837 to 857 (IGLK…GFIY), 858 to 878 (QWKL…CSLT), 938 to 958 (IIAG…YALC), and 976 to 996 (VMIA…AGAF). Residues 713-1002 (VALGILSSVV…AGAFATKLAD (290 aa)) enclose the ABC transmembrane type-1 2 domain. Positions 1036-1274 (IEYRNVQFIY…GGEYKTRYDL (239 aa)) constitute an ABC transporter 2 domain. An ATP-binding site is contributed by 1071–1078 (GQTGCGKS). The N-linked (GlcNAc...) asparagine glycan is linked to N1113.

The protein belongs to the ABC transporter superfamily. ABCB family. Multidrug resistance exporter (TC 3.A.1.201) subfamily.

It localises to the membrane. The enzyme catalyses ATP + H2O + xenobioticSide 1 = ADP + phosphate + xenobioticSide 2.. Its function is as follows. Energy-dependent efflux pump responsible for decreased drug accumulation in multi-drug-resistant cells. Confers vinblastine resistance. The protein is Multidrug resistance protein 1 (MDR1) of Leishmania enriettii.